The sequence spans 245 residues: MINISTSPRQTLDWTALKPADGSPAVEWRISDSPVPYPEAVATMEARAAAIAAGEATELVWLLEHPPLYTAGTSGHASDLLEERFPLFTTGRGGQLTYHGPGQRVAYVMLDLKRRRPDVRAYVAALEQWIIATLDAFNIRGERREDRVGVWVRRPDKGVGYEDKIAAIGVRLKRWVSLHGIAINVEPDLSHFKAIVPCGISDPRYGVTSLVDLGLPVVMTDVDIALRAAFENIFGETRAAAPAGI.

Residues 54-238 (GEATELVWLL…AFENIFGETR (185 aa)) enclose the BPL/LPL catalytic domain. Substrate is bound by residues 92–99 (RGGQLTYH), 167–169 (AIG), and 180–182 (GIA). C198 acts as the Acyl-thioester intermediate in catalysis.

The protein belongs to the LipB family.

The protein resides in the cytoplasm. The catalysed reaction is octanoyl-[ACP] + L-lysyl-[protein] = N(6)-octanoyl-L-lysyl-[protein] + holo-[ACP] + H(+). The protein operates within protein modification; protein lipoylation via endogenous pathway; protein N(6)-(lipoyl)lysine from octanoyl-[acyl-carrier-protein]: step 1/2. Catalyzes the transfer of endogenously produced octanoic acid from octanoyl-acyl-carrier-protein onto the lipoyl domains of lipoate-dependent enzymes. Lipoyl-ACP can also act as a substrate although octanoyl-ACP is likely to be the physiological substrate. The chain is Octanoyltransferase from Rhodopseudomonas palustris (strain ATCC BAA-98 / CGA009).